A 351-amino-acid polypeptide reads, in one-letter code: tRNA-specific 2-thiouridylase MnmA (351 aa).

Residue 6–13 (ALSGGTDS) coordinates ATP. The active-site Nucleophile is Cys-96. A disulfide bridge connects residues Cys-96 and Cys-193. Position 120 (Gly-120) interacts with ATP. Positions 143 to 145 (KDQ) are interaction with tRNA. Residue Cys-193 is the Cysteine persulfide intermediate of the active site. The segment at 298 to 299 (RY) is interaction with tRNA.

This sequence belongs to the MnmA/TRMU family.

The protein resides in the cytoplasm. The enzyme catalyses S-sulfanyl-L-cysteinyl-[protein] + uridine(34) in tRNA + AH2 + ATP = 2-thiouridine(34) in tRNA + L-cysteinyl-[protein] + A + AMP + diphosphate + H(+). Catalyzes the 2-thiolation of uridine at the wobble position (U34) of tRNA, leading to the formation of s(2)U34. The protein is tRNA-specific 2-thiouridylase MnmA of Nitratidesulfovibrio vulgaris (strain DSM 19637 / Miyazaki F) (Desulfovibrio vulgaris).